A 327-amino-acid chain; its full sequence is UDP-N-acetylenolpyruvoylglucosamine reductase (327 aa).

The FAD-binding PCMH-type domain occupies 42–223 (RTGGLAELFY…RAAMDEVALH (182 aa)). Residue Arg-188 is part of the active site. The active-site Proton donor is Ser-237. Glu-307 is a catalytic residue.

This sequence belongs to the MurB family. The cofactor is FAD.

The protein localises to the cytoplasm. The catalysed reaction is UDP-N-acetyl-alpha-D-muramate + NADP(+) = UDP-N-acetyl-3-O-(1-carboxyvinyl)-alpha-D-glucosamine + NADPH + H(+). It participates in cell wall biogenesis; peptidoglycan biosynthesis. Cell wall formation. The polypeptide is UDP-N-acetylenolpyruvoylglucosamine reductase (Bartonella tribocorum (strain CIP 105476 / IBS 506)).